Consider the following 489-residue polypeptide: Arginine biosynthesis bifunctional protein ArgJ 2, mitochondrial (489 aa).

A mitochondrion-targeting transit peptide spans 1-11 (MLLISRIGARH). Substrate-binding residues include T205, K234, T245, E341, and N484. T245 serves as the catalytic Nucleophile.

Belongs to the ArgJ family. As to quaternary structure, heterodimer of an alpha and a beta chain. The alpha and beta chains are autoproteolytically processed from a single precursor protein within the mitochondrion.

Its subcellular location is the mitochondrion matrix. The catalysed reaction is N(2)-acetyl-L-ornithine + L-glutamate = N-acetyl-L-glutamate + L-ornithine. The enzyme catalyses L-glutamate + acetyl-CoA = N-acetyl-L-glutamate + CoA + H(+). It functions in the pathway amino-acid biosynthesis; L-arginine biosynthesis; L-ornithine and N-acetyl-L-glutamate from L-glutamate and N(2)-acetyl-L-ornithine (cyclic): step 1/1. The protein operates within amino-acid biosynthesis; L-arginine biosynthesis; N(2)-acetyl-L-ornithine from L-glutamate: step 1/4. Catalyzes two activities which are involved in the cyclic version of arginine biosynthesis: the synthesis of acetylglutamate from glutamate and acetyl-CoA, and of ornithine by transacetylation between acetylornithine and glutamate. This chain is Arginine biosynthesis bifunctional protein ArgJ 2, mitochondrial, found in Sclerotinia sclerotiorum (strain ATCC 18683 / 1980 / Ss-1) (White mold).